A 37-amino-acid polypeptide reads, in one-letter code: Large ribosomal subunit protein bL36c (37 aa).

The protein belongs to the bacterial ribosomal protein bL36 family.

The protein localises to the plastid. It is found in the chloroplast. In Cyanidium caldarium (Red alga), this protein is Large ribosomal subunit protein bL36c (rpl36).